The sequence spans 201 residues: tRNA (guanine-N(7)-)-methyltransferase (201 aa).

S-adenosyl-L-methionine contacts are provided by Glu-34, Glu-59, Asp-86, and Asp-107. Residue Asp-107 is part of the active site. Residues Lys-111, Asp-143, and 181–184 (TDYE) contribute to the substrate site.

The protein belongs to the class I-like SAM-binding methyltransferase superfamily. TrmB family.

The enzyme catalyses guanosine(46) in tRNA + S-adenosyl-L-methionine = N(7)-methylguanosine(46) in tRNA + S-adenosyl-L-homocysteine. The protein operates within tRNA modification; N(7)-methylguanine-tRNA biosynthesis. Its function is as follows. Catalyzes the formation of N(7)-methylguanine at position 46 (m7G46) in tRNA. In Mycoplasma mobile (strain ATCC 43663 / 163K / NCTC 11711) (Mesomycoplasma mobile), this protein is tRNA (guanine-N(7)-)-methyltransferase.